A 396-amino-acid chain; its full sequence is Maltose/maltodextrin-binding periplasmic protein (396 aa).

The N-terminal stretch at 1-26 is a signal peptide; that stretch reads MKIKTGARILALSALTTMMFSASALA.

It belongs to the bacterial solute-binding protein 1 family. As to quaternary structure, the complex is composed of two ATP-binding proteins (MalK), two transmembrane proteins (MalG and MalF) and a solute-binding protein (MalE).

The protein localises to the periplasm. In terms of biological role, part of the ABC transporter complex MalEFGK involved in maltose/maltodextrin import. Binds maltose and higher maltodextrins. The polypeptide is Maltose/maltodextrin-binding periplasmic protein (malE) (Escherichia coli O157:H7).